Consider the following 246-residue polypeptide: uncharacterized protein (246 aa).

Disordered regions lie at residues 9 to 125 (CSRV…GAMA) and 155 to 203 (QPVR…EEKA). Over residues 27 to 37 (GTRRQRQRPRQ) the composition is skewed to basic residues. 2 stretches are compositionally biased toward pro residues: residues 54–64 (PRPPTGPPARY) and 101–117 (EPRPPPESPGAPPPPGS). Over residues 161 to 176 (KLPKGKGRLRRPRQSR) the composition is skewed to basic residues. Residue Thr179 is modified to Phosphothreonine. Phosphoserine occurs at positions 196, 210, and 220.

It is found in the cytoplasm. This is an uncharacterized protein from Mus musculus (Mouse).